Consider the following 199-residue polypeptide: Probable nicotinate-nucleotide adenylyltransferase (199 aa).

The protein belongs to the NadD family.

It catalyses the reaction nicotinate beta-D-ribonucleotide + ATP + H(+) = deamido-NAD(+) + diphosphate. Its pathway is cofactor biosynthesis; NAD(+) biosynthesis; deamido-NAD(+) from nicotinate D-ribonucleotide: step 1/1. In terms of biological role, catalyzes the reversible adenylation of nicotinate mononucleotide (NaMN) to nicotinic acid adenine dinucleotide (NaAD). The protein is Probable nicotinate-nucleotide adenylyltransferase of Roseobacter denitrificans (strain ATCC 33942 / OCh 114) (Erythrobacter sp. (strain OCh 114)).